Reading from the N-terminus, the 175-residue chain is Probable chemoreceptor glutamine deamidase CheD (175 aa).

It belongs to the CheD family.

The enzyme catalyses L-glutaminyl-[protein] + H2O = L-glutamyl-[protein] + NH4(+). Its function is as follows. Probably deamidates glutamine residues to glutamate on methyl-accepting chemotaxis receptors (MCPs), playing an important role in chemotaxis. In Jannaschia sp. (strain CCS1), this protein is Probable chemoreceptor glutamine deamidase CheD.